We begin with the raw amino-acid sequence, 1106 residues long: Exportin-T (1106 aa).

The tract at residues T336–D357 is disordered. Polar residues predominate over residues R343–D357.

This sequence belongs to the exportin family.

It localises to the nucleus. The protein resides in the cytoplasm. Its function is as follows. tRNA nucleus export receptor which facilitates tRNA translocation across the nuclear pore complex. Involved in pre-tRNA splicing, probably by affecting the interaction of pre-tRNA with splicing endonuclease. The polypeptide is Exportin-T (LOS1) (Mycosarcoma maydis (Corn smut fungus)).